Reading from the N-terminus, the 1249-residue chain is Myosin-1 (1249 aa).

Residues 1–40 (MGHSRRPAGGEKKSRFGRSKAAADVGDGRQAGGKPQVRKA) are disordered. In terms of domain architecture, Myosin motor spans 50-729 (IGVSDLTLLS…TLFALEAMRD (680 aa)). ATP is bound at residue 143–150 (GESGAGKT). A Phosphoserine modification is found at S371. An actin-binding region spans residues 418 to 500 (SIGILDIYGF…PGVFAALNDA (83 aa)). IQ domains are found at residues 733 to 753 (HNMA…RTEC) and 754 to 779 (AIRI…QGHT). The TH1 domain occupies 787-979 (RRRMSILGSR…PGEPPNSVSK (193 aa)). 2 disordered regions span residues 959–1081 (DSYK…KAKA) and 1127–1249 (EAYL…DDDW). Composition is skewed to low complexity over residues 1026-1035 (PQTAAAQPTP) and 1043-1061 (PVAA…ASAR). Pro residues predominate over residues 1062–1073 (APPPPPPAPPAA). Residues 1074 to 1135 (AGPKKAKALY…PEAYLEEQVA (62 aa)) enclose the SH3 domain. Pro residues predominate over residues 1137-1149 (TPKPAPPPPPPVA). Residues 1150–1170 (PRASPAPVNGSAAVAAAKAKA) are compositionally biased toward low complexity. Residues 1199–1221 (VSMNSQGDSSGASGRGTPSSVSN) show a composition bias toward polar residues. A compositionally biased stretch (low complexity) spans 1222–1235 (ASLAGGLAEALRAR).

This sequence belongs to the TRAFAC class myosin-kinesin ATPase superfamily. Myosin family. In terms of assembly, interacts (via IQ domains) with camA. In terms of processing, phosphorylation of the TEDS site (Ser-371) is required for the polarization of the actin cytoskeleton. Phosphorylation probably activates the myosin-I ATPase activity.

Its subcellular location is the cytoplasm. The protein resides in the cytoskeleton. It is found in the actin patch. In terms of biological role, type-I myosin implicated in the organization of the actin cytoskeleton. Required for proper actin cytoskeleton polarization. At the cell cortex, assembles in patch-like structures together with proteins from the actin-polymerizing machinery and promotes actin assembly. Functions as actin nucleation-promoting factor (NPF) for the Arp2/3 complex. Plays an important role in polarized growth, spore germination, hyphal morphogenesis, and septal wall formation. In Emericella nidulans (strain FGSC A4 / ATCC 38163 / CBS 112.46 / NRRL 194 / M139) (Aspergillus nidulans), this protein is Myosin-1 (myoA).